The following is a 319-amino-acid chain: Homoserine O-acetyltransferase (319 aa).

Cysteine 142 (acyl-thioester intermediate) is an active-site residue. Substrate contacts are provided by lysine 163 and serine 192. The Proton acceptor role is filled by histidine 235. Glutamate 237 is an active-site residue. Residue arginine 249 coordinates substrate.

The protein belongs to the MetA family.

It localises to the cytoplasm. It carries out the reaction L-homoserine + acetyl-CoA = O-acetyl-L-homoserine + CoA. Its pathway is amino-acid biosynthesis; L-methionine biosynthesis via de novo pathway; O-acetyl-L-homoserine from L-homoserine: step 1/1. Transfers an acetyl group from acetyl-CoA to L-homoserine, forming acetyl-L-homoserine. The sequence is that of Homoserine O-acetyltransferase from Lactococcus lactis subsp. cremoris (strain MG1363).